A 372-amino-acid chain; its full sequence is Cytochrome b (372 aa).

Helical transmembrane passes span 25–45 (FGSM…FLAI), 69–90 (WTMQ…YIHI), 105–125 (WLSG…GYVL), and 170–190 (FFAL…IHII). Residues H75 and H89 each coordinate heme b. Residues H174 and H188 each contribute to the heme b site. A ubiquinone is bound at residue H193. Transmembrane regions (helical) follow at residues 218 to 238 (YKDM…LSFS), 280 to 300 (LGGT…PFTH), 312 to 332 (LTQI…WTAT), and 339 to 358 (FIII…IMNP).

The protein belongs to the cytochrome b family. As to quaternary structure, the cytochrome bc1 complex contains 3 respiratory subunits (MT-CYB, CYC1 and UQCRFS1), 2 core proteins (UQCRC1 and UQCRC2) and probably 6 low-molecular weight proteins. The cofactor is heme b.

It is found in the mitochondrion inner membrane. Its function is as follows. Component of the ubiquinol-cytochrome c reductase complex (complex III or cytochrome b-c1 complex) that is part of the mitochondrial respiratory chain. The b-c1 complex mediates electron transfer from ubiquinol to cytochrome c. Contributes to the generation of a proton gradient across the mitochondrial membrane that is then used for ATP synthesis. This chain is Cytochrome b (MT-CYB), found in Ophiophagus hannah (King cobra).